We begin with the raw amino-acid sequence, 228 residues long: MSYAEKPDEITKDEWMEKLNNLHVQRADMNRLIMNYLVTEGFKEAAEKFRMESGIEPSVDLETLDERIKIREMILKGQIQEAIALINSLHPELLDTNRYLYFHLQQQHLIELIRQRETEAALEFAQTQLAEQGEESRECLTEMERTLALLAFDSPEESPFGDLLHMMQRQKVWSEVNQAVLDYENRESTPKLAKLLKLLLWAQNELDQKKVKYPKMTDLSKGVIEEPK.

The LisH domain occupies 25–57; sequence QRADMNRLIMNYLVTEGFKEAAEKFRMESGIEP. One can recognise a CTLH domain in the interval 63 to 120; the sequence is TLDERIKIREMILKGQIQEAIALINSLHPELLDTNRYLYFHLQQQHLIELIRQRETEA. The segment at 116–212 is interaction with CTNNB1; sequence RETEAALEFA…QNELDQKKVK (97 aa).

The protein belongs to the GID8 family. In terms of assembly, homodimer; may also form higher oligomers. Identified in the CTLH complex that contains GID4, RANBP9 and/or RANBP10, MKLN1, MAEA, RMND5A (or alternatively its paralog RMND5B), GID8, ARMC8, WDR26 and YPEL5. Within this complex, MAEA, RMND5A (or alternatively its paralog RMND5B), GID8, WDR26, and RANBP9 and/or RANBP10 form the catalytic core, while GID4, MKLN1, ARMC8 and YPEL5 have ancillary roles. Interacts with RANBP9. Part of a complex consisting of RANBP9, MKLN1 and GID8. Interacts with CTNNB1, AXIN1 and GSK3B. In terms of processing, polyubiquitinated through 'Lys-48'-polyubiquitin chains, leading to proteasomal degradation in the absence of Wnt stimulation. Ubiquitous.

The protein resides in the cytoplasm. The protein localises to the nucleus. Core component of the CTLH E3 ubiquitin-protein ligase complex that selectively accepts ubiquitin from UBE2H and mediates ubiquitination and subsequent proteasomal degradation of the transcription factor HBP1. Acts as a positive regulator of Wnt signaling pathway by promoting beta-catenin (CTNNB1) nuclear accumulation. This chain is Glucose-induced degradation protein 8 homolog (Gid8), found in Mus musculus (Mouse).